The sequence spans 975 residues: Probable outer membrane protein PmpA (975 aa).

Positions 1–51 (MNRVIEIHAHYDQRQLSQSPNTNFLVHHPYLTLIPKFLLGALIVYAPYSFA) are cleaved as a signal peptide. An Autotransporter domain is found at 699–975 (RSLIPTSYFG…SLSCGGYVGF (277 aa)).

It belongs to the PMP outer membrane protein family.

The protein resides in the secreted. It localises to the cell wall. The protein localises to the cell outer membrane. This Chlamydia trachomatis serovar D (strain ATCC VR-885 / DSM 19411 / UW-3/Cx) protein is Probable outer membrane protein PmpA (pmpA).